The following is a 142-amino-acid chain: MGTPASVVSEPPLWQVSTPQTRGRKQASANIFQDAELVQIQGLFQRSGDQLAEERAQIIWECAGDHRVAEALRRLRRKRPPKQNHCSRLRVPEPGSTASDPQASTTDTASSEQSGNSRRTSARAPRNWNKPGPTGYLHQIRH.

2 disordered regions span residues 1 to 28 (MGTP…KQAS) and 74 to 142 (RLRR…QIRH). Positions 15 to 28 (QVSTPQTRGRKQAS) are enriched in polar residues. The segment covering 74–88 (RLRRKRPPKQNHCSR) has biased composition (basic residues). The segment covering 96–119 (STASDPQASTTDTASSEQSGNSRR) has biased composition (polar residues).

Functionally, may be involved in MAP kinase activation, epithelial sodium channel (ENaC) down-regulation and cell cycling. This is Arginine vasopressin-induced protein 1 (Avpi1) from Mus musculus (Mouse).